Here is a 441-residue protein sequence, read N- to C-terminus: N-acetylmuramyl-L-alanine amidase (441 aa).

Residues 1-25 (MKTKTLFIFSAILTLSIFAPNETFA) form the signal peptide.

Belongs to the peptidase S12 family.

The catalysed reaction is Hydrolyzes the link between N-acetylmuramoyl residues and L-amino acid residues in certain cell-wall glycopeptides.. The protein operates within cell wall biogenesis; peptidoglycan recycling. Functionally, involved in muropeptide recycling. Hydrolyzes the amide bond between N-acetylmuramic acid (MurNAc) and the L-alanine residue of the stem peptide. Cannot hydrolyze muropeptides containing N-acetylglucosamine (GlcNAc) at the non-reducing end. In Bacillus subtilis (strain 168), this protein is N-acetylmuramyl-L-alanine amidase.